The sequence spans 524 residues: Cytochrome P450 monooxygenase alt1 (524 aa).

The helical transmembrane segment at 24–44 threads the bilayer; that stretch reads IANMLSVIAFSICISPIVYFL. Cysteine 469 contacts heme.

It belongs to the cytochrome P450 family. Requires heme as cofactor.

The protein localises to the membrane. It participates in secondary metabolite biosynthesis. Cytochrome P450 monooxygenase; part of the gene cluster that mediates the biosynthesis of alternapyrone derivatives. Alternapyrone is a decaketide with octa-methylation from methionine on every C2 unit except the third unit. All the domains in the polyketide synthase alt5 are apparently involved in alternapyrone synthesis, that is, the 8 CMeT, 7 KR, 7 DH, and 4 ER reactions in the 9 KS-mediated condensation steps required for alternapyrone synthesis. the alternapyrone produced by alt5 might be intensively modified by cytochrome P450 monooxygenases alt1, alt2 and alt3 and FAD-dependent oxidoreductase alt4 present in the alt gene cluster. The chain is Cytochrome P450 monooxygenase alt1 from Alternaria solani.